We begin with the raw amino-acid sequence, 274 residues long: Thiamine kinase (274 aa).

Belongs to the thiamine kinase family.

The enzyme catalyses thiamine + ATP = thiamine phosphate + ADP + H(+). It participates in cofactor biosynthesis; thiamine diphosphate biosynthesis; thiamine phosphate from thiamine: step 1/1. Catalyzes the ATP-dependent phosphorylation of thiamine to thiamine phosphate. Is involved in thiamine salvage. The polypeptide is Thiamine kinase (Escherichia coli O157:H7).